The chain runs to 208 residues: FMN-dependent NADH:quinone oxidoreductase 1 (208 aa).

This sequence belongs to the azoreductase type 1 family. Homodimer. FMN serves as cofactor.

It catalyses the reaction 2 a quinone + NADH + H(+) = 2 a 1,4-benzosemiquinone + NAD(+). The catalysed reaction is N,N-dimethyl-1,4-phenylenediamine + anthranilate + 2 NAD(+) = 2-(4-dimethylaminophenyl)diazenylbenzoate + 2 NADH + 2 H(+). In terms of biological role, quinone reductase that provides resistance to thiol-specific stress caused by electrophilic quinones. Functionally, also exhibits azoreductase activity. Catalyzes the reductive cleavage of the azo bond in aromatic azo compounds to the corresponding amines. The sequence is that of FMN-dependent NADH:quinone oxidoreductase 1 from Bacillus licheniformis (strain ATCC 14580 / DSM 13 / JCM 2505 / CCUG 7422 / NBRC 12200 / NCIMB 9375 / NCTC 10341 / NRRL NRS-1264 / Gibson 46).